The following is a 20-amino-acid chain: Alpha-amylase (20 aa).

The catalysed reaction is Endohydrolysis of (1-&gt;4)-alpha-D-glucosidic linkages in polysaccharides containing three or more (1-&gt;4)-alpha-linked D-glucose units.. Strongly inhibited by Hg (2+). Inhibited by Zn (2+). Activated by Fe (2+), Mg (2+) and Ba (2+). In terms of biological role, alpha-amylase active towards amylose, starch, amylopectin and maltodextrins. Has lower activity towards glycogen, and is not active towards alpha/beta-cyclodextrin. This chain is Alpha-amylase, found in Bacillus sp.